We begin with the raw amino-acid sequence, 342 residues long: Alpha-(1,3)-fucosyltransferase 7 (342 aa).

The Cytoplasmic portion of the chain corresponds to 1–11 (MQNAGLSPTPS). A helical; Signal-anchor for type II membrane protein transmembrane segment spans residues 12–31 (LRALGGLAMAALLSTVWLWW). Topologically, residues 32-342 (RLGAAPGGAP…YQDLEGWFQA (311 aa)) are extracellular. A disulfide bridge connects residues Cys68 and Cys76. N-linked (GlcNAc...) asparagine glycosylation occurs at Asn81. Cys211 and Cys214 are disulfide-bonded. Asn291 carries an N-linked (GlcNAc...) asparagine glycan. Cys318 and Cys321 are disulfide-bonded.

Belongs to the glycosyltransferase 10 family. Post-translationally, N-glycosylated. As to expression, expressed in thymus, spleen, liver and lung. Highly expressed in the thymus and lower expressed in the lung.

The protein localises to the membrane. The catalysed reaction is an N-acetyl-alpha-neuraminyl-(2-&gt;3)-beta-D-galactosyl-(1-&gt;4)-N-acetyl-beta-D-glucosaminyl derivative + GDP-beta-L-fucose = an alpha-Neu5Ac-(2-&gt;3)-beta-D-Gal-(1-&gt;4)-[alpha-L-Fuc-(1-&gt;3)]-beta-D-GlcNAc derivative + GDP + H(+). It carries out the reaction a neolactoside IV(3)-alpha-NeuAc-nLc4Cer + GDP-beta-L-fucose = a neolactoside IV(3)-alpha-NeuNAc,III(3)-alpha-Fuc-nLc4Cer + GDP + H(+). It catalyses the reaction a neolactoside VI(3)-alpha-NeuNAc-nLc6Cer + GDP-beta-L-fucose = a neolactoside VI(3)-alpha-NeuAc,V(3)-alphaFuc-nLc6Cer + GDP + H(+). The enzyme catalyses an alpha-Neu5Ac-(2-&gt;3)-beta-D-Gal-(1-&gt;4)-beta-D-GlcNAc-(1-&gt;3)-beta-D-Gal-(1-&gt;4)-[alpha-L-Fuc-(1-&gt;3)]-beta-D-GlcNAc derivative + GDP-beta-L-fucose = an alpha-Neu5Ac-(2-&gt;3)-beta-D-Gal-(1-&gt;4)-[alpha-L-Fuc-(1-&gt;3)]-beta-D-GlcNAc-(1-&gt;3)-beta-D-Gal-(1-&gt;4)-[alpha-L-Fuc-(1-&gt;3)]-beta-D-GlcNAc derivative + GDP + H(+). The catalysed reaction is an alpha-Neu5Ac-(2-&gt;3)-beta-D-Gal-(1-&gt;4)-beta-D-GlcNAc6S derivative + GDP-beta-L-fucose = an alpha-Neu5Ac-(2-&gt;3)-beta-D-Gal-(1-&gt;4)-[alpha-L-Fuc-(1-&gt;3)]-beta-D-GlcNAc6S derivative + GDP + H(+). It carries out the reaction alpha-Neu5Ac-(2-&gt;3)-beta-D-Gal-(1-&gt;4)-beta-D-GlcNAc-(1-&gt;3)-beta-D-Gal-(1-&gt;4)-D-Glc + GDP-beta-L-fucose = alpha-Neu5Ac-(2-&gt;3)-beta-D-Gal-(1-&gt;4)-[alpha-L-Fuc-(1-&gt;3)]-beta-D-GlcNAc-(1-&gt;3)-beta-D-Gal-(1-&gt;4)-D-Glc + GDP + H(+). It catalyses the reaction alpha-Neu5Ac-(2-&gt;3)-beta-D-Gal-(1-&gt;4)-beta-D-GlcNAc-(1-&gt;3)-beta-D-Gal-(1-&gt;4)-[alpha-L-Fuc-(1-&gt;3)]-beta-D-GlcNAc-(1-&gt;3)-beta-D-Gal-(1-&gt;4)-beta-D-GlcNAc + GDP-beta-L-fucose = alpha-Neu5Ac-(2-&gt;3)-beta-D-Gal-(1-&gt;4)-[alpha-L-Fuc-(1-&gt;3)]-beta-D-GlcNAc-(1-&gt;3)-beta-D-Gal-(1-&gt;4)-[alpha-L-Fuc-(1-&gt;3)]-beta-D-GlcNAc-(1-&gt;3)-beta-D-Gal-(1-&gt;4)-beta-D-GlcNAc + GDP + H(+). The enzyme catalyses alpha-Neu5Ac-(2-&gt;3)-beta-D-Gal-(1-&gt;4)-beta-D-GlcNAc-(1-&gt;3)-beta-D-Gal-(1-&gt;4)-beta-D-GlcNAc-(1-&gt;3)-beta-D-Gal-(1-&gt;4)-beta-D-GlcNAc + GDP-beta-L-fucose = alpha-Neu5Ac-(2-&gt;3)-beta-D-Gal-(1-&gt;4)-[alpha-L-Fuc-(1-&gt;3)]-beta-D-GlcNAc-(1-&gt;3)-beta-D-Gal-(1-&gt;4)-beta-D-GlcNAc-(1-&gt;3)-beta-D-Gal-(1-&gt;4)-beta-D-GlcNAc + GDP + H(+). It functions in the pathway protein modification; protein glycosylation. With respect to regulation, inhibited by NaCl. Inhibited by GDP in a concentration dependent manner, with an IC(50) value of 93 uM. Also inhibited by GMP and GTP. Inhibited by N-ethylmaleimide. Activated by poly(ethylene glycol) by enhancing the thermal stability of FUT7. Activated by Mn2+, Ca2+, and Mg2+. Both panosialin A and B inhibit activity with IC(50) values of 4.8 and 5.3 ug/ml, respectively. Inhibited by gallic acid (GA) and (-)-epigallocatechin gallate (EGCG) in a time-dependent and irreversible manner with IC(50) values of 60 and 700 nM, respectively. In terms of biological role, catalyzes the transfer of L-fucose, from a guanosine diphosphate-beta-L-fucose, to the N-acetyl glucosamine (GlcNAc) of a distal alpha2,3 sialylated lactosamine unit of a glycoprotein or a glycolipid-linked sialopolylactosamines chain through an alpha-1,3 glycosidic linkage and participates in the final fucosylation step in the biosynthesis of the sialyl Lewis X (sLe(x)), a carbohydrate involved in cell and matrix adhesion during leukocyte trafficking and fertilization. In vitro, also synthesizes sialyl-dimeric-Lex structures, from VIM-2 structures and both di-fucosylated and trifucosylated structures from mono-fucosylated precursors. However does not catalyze alpha 1-3 fucosylation when an internal alpha 1-3 fucosylation is present in polylactosamine chain and the fucosylation rate of the internal GlcNAc residues is reduced once fucose has been added to the distal GlcNAc. Also catalyzes the transfer of a fucose from GDP-beta-fucose to the 6-sulfated a(2,3)sialylated substrate to produce 6-sulfo sLex mediating significant L-selectin-dependent cell adhesion. Through sialyl-Lewis(x) biosynthesis, can control SELE- and SELP-mediated cell adhesion with leukocytes and allows leukocytes tethering and rolling along the endothelial tissue thereby enabling the leukocytes to accumulate at a site of inflammation. May enhance embryo implantation through sialyl Lewis X (sLeX)-mediated adhesion of embryo cells to endometrium. May affect insulin signaling by up-regulating the phosphorylation and expression of some signaling molecules involved in the insulin-signaling pathway through SLe(x) which is present on the glycans of the INSRR alpha subunit. The chain is Alpha-(1,3)-fucosyltransferase 7 from Bos taurus (Bovine).